We begin with the raw amino-acid sequence, 2058 residues long: Protein Daple (2058 aa).

The Calponin-homology (CH) domain maps to 11–131 (HFLESPLVTW…KILLLMLGCA (121 aa)). Coiled-coil stretches lie at residues 195–221 (HLKR…DYLQ), 247–428 (EDKK…SMNE), 455–1016 (ELNE…LRGA), 1043–1082 (ELLK…NLNL), and 1108–1388 (ANLQ…KFYD). 7 disordered regions span residues 1406-1444 (LIKP…MRPL), 1480-1592 (HRMS…EDMI), 1617-1655 (TKNR…PGSE), 1696-1724 (LHPS…LPSA), 1831-1857 (YSAT…RGNS), 1940-1959 (LALP…ASSL), and 1988-2051 (PVRP…PQTV). The segment covering 1409–1418 (PKKEPSRESV) has biased composition (basic and acidic residues). Over residues 1419-1429 (KSPTDVQSKTM) the composition is skewed to polar residues. Positions 1494–1506 (GPEHLSRSRRMES) are enriched in basic and acidic residues. The span at 1552–1577 (NAGSSRVPWTSSLEVSRSASNSSSPL) shows a compositional bias: polar residues. Short sequence motifs (GBA) lie at residues 1653–1675 (GSEM…PSRR) and 1676–1697 (HSLN…ETLH). The segment covering 1831 to 1841 (YSATSSSQSPE) has biased composition (polar residues). A compositionally biased stretch (low complexity) spans 2039 to 2048 (PASPDPSADP). The PDZ-binding signature appears at 2055–2058 (YGCV).

The protein belongs to the CCDC88 family. Interacts with dvl2/dsh via the PDZ-binding motif. Expressed weakly in gastrulae, with slightly stronger expression in the dorsal region. In neurulae, expressed in the neural plate with strong expression in the presumptive mesencephalic region. At the tailbud stage, expressed in somatic cells and in part of the tail. Also strongly expressed in regions of the head including eye vesicles, otic vesicles, olfactory placode and the pharyngeal cavity.

It localises to the cytoplasm. The protein localises to the cell junction. Functionally, positive regulator of Wnt signaling, acting synergistically with dvl2/dsh. Functions upstream of ctnnb1/beta-catenin in the canonical Wnt pathway, and also activates jnk in the Wnt/planar cell polarity (PCP) pathway. Acts as a non-receptor guanine nucleotide exchange factor which binds to and activates guanine nucleotide-binding protein G(i) alpha subunits. This promotes apical cell constriction and subsequent bending of the neural plate during neurulation via arhgef18. The protein is Protein Daple (ccdc88c) of Xenopus laevis (African clawed frog).